Consider the following 228-residue polypeptide: Ribosomal RNA small subunit methyltransferase G (228 aa).

S-adenosyl-L-methionine contacts are provided by residues Gly-89, Leu-94, 140–141 (VE), and Arg-159.

This sequence belongs to the methyltransferase superfamily. RNA methyltransferase RsmG family.

It is found in the cytoplasm. It catalyses the reaction guanosine(527) in 16S rRNA + S-adenosyl-L-methionine = N(7)-methylguanosine(527) in 16S rRNA + S-adenosyl-L-homocysteine. Its function is as follows. Specifically methylates the N7 position of guanine in position 527 of 16S rRNA. This is Ribosomal RNA small subunit methyltransferase G from Burkholderia cenocepacia (strain HI2424).